Reading from the N-terminus, the 424-residue chain is Pachytene checkpoint protein 2 homolog (424 aa).

Residue 171–178 coordinates ATP; that stretch reads GPPGTGKT.

The protein belongs to the AAA ATPase family. PCH2 subfamily.

In terms of biological role, plays a key role in chromosome recombination and chromosome structure development during meiosis. Required at early steps in meiotic recombination that leads to non-crossovers pathways. Also needed for efficient completion of homologous synapsis by influencing crossover distribution along the chromosomes affecting both crossovers and non-crossovers pathways. The protein is Pachytene checkpoint protein 2 homolog (trip13) of Danio rerio (Zebrafish).